The chain runs to 296 residues: tRNA U34 carboxymethyltransferase (296 aa).

Carboxy-S-adenosyl-L-methionine-binding positions include lysine 64, tryptophan 78, lysine 83, glycine 102, 124 to 126, 151 to 152, tyrosine 171, and arginine 286; these read DPS and VE.

This sequence belongs to the class I-like SAM-binding methyltransferase superfamily. CmoB family. As to quaternary structure, homotetramer.

It catalyses the reaction carboxy-S-adenosyl-L-methionine + 5-hydroxyuridine(34) in tRNA = 5-carboxymethoxyuridine(34) in tRNA + S-adenosyl-L-homocysteine + H(+). Catalyzes carboxymethyl transfer from carboxy-S-adenosyl-L-methionine (Cx-SAM) to 5-hydroxyuridine (ho5U) to form 5-carboxymethoxyuridine (cmo5U) at position 34 in tRNAs. This Sulfurimonas denitrificans (strain ATCC 33889 / DSM 1251) (Thiomicrospira denitrificans (strain ATCC 33889 / DSM 1251)) protein is tRNA U34 carboxymethyltransferase.